A 416-amino-acid polypeptide reads, in one-letter code: Calreticulin (416 aa).

The signal sequence occupies residues 1 to 17 (MLLSVPLLLGLLGLAAA). Positions 18–197 (DPAIYFKEQF…NSQVESGSLE (180 aa)) are N-domain. Residue Gln26 coordinates Ca(2+). At Lys48 the chain carries N6-acetyllysine. Positions 62 and 64 each coordinate Ca(2+). At Lys64 the chain carries N6-(2-hydroxyisobutyryl)lysine. Cysteines 105 and 137 form a disulfide. An alpha-D-glucoside is bound by residues Tyr109, Lys111, Tyr128, and Asp135. Position 159 is an N6-acetyllysine (Lys159). The stretch at 191–202 (VESGSLEDDWDF) is one 1-1 repeat. Residues 191-255 (VESGSLEDDW…DAKKPEDWDE (65 aa)) form a 4 X approximate repeats region. The tract at residues 193-277 (SGSLEDDWDF…NPEYKGEWKP (85 aa)) is disordered. Positions 198 to 308 (DDWDFLPPKK…YSPDANIYAY (111 aa)) are P-domain. Basic and acidic residues predominate over residues 207–251 (KIKDPDAAKPEDWDERAKIDDPTDSKPEDWDKPEHIPDPDAKKPE). N6-acetyllysine is present on Lys209. 6 consecutive repeat copies span residues 210–221 (DPDAAKPEDWDE), 227–238 (DPTDSKPEDWDK), 244–255 (DPDAKKPEDWDE), 259–269 (GEWEPPVIQNP), 273–283 (GEWKPRQIDNP), and 287–297 (GTWIHPEIDNP). The segment at 237 to 270 (DKPEHIPDPDAKKPEDWDEEMDGEWEPPVIQNPE) is interaction with PPIB. The segment covering 252–261 (DWDEEMDGEW) has biased composition (acidic residues). The interval 259 to 297 (GEWEPPVIQNPEYKGEWKPRQIDNPDYKGTWIHPEIDNP) is 3 X approximate repeats. Residues 309-416 (DSFAVLGLDL…DATGQAKDEL (108 aa)) are C-domain. Asp317 contacts an alpha-D-glucoside. Asp328 is a Ca(2+) binding site. The tract at residues 350–416 (TKAAEKQMKD…DATGQAKDEL (67 aa)) is disordered. The span at 352-379 (AAEKQMKDKQDEEQRLKEEEEDKKRKEE) shows a compositional bias: basic and acidic residues. Residues 380 to 408 (EEAEDKEDEDDRDEDEDEEDEKEEDEEDA) show a composition bias toward acidic residues. The Prevents secretion from ER signature appears at 413-416 (KDEL).

The protein belongs to the calreticulin family. As to quaternary structure, monomer. Component of an EIF2 complex at least composed of CELF1/CUGBP1, CALR, CALR3, EIF2S1, EIF2S2, HSP90B1 and HSPA5. Interacts with GABARAP, NR3C1 and TRIM21. Interacts with PPIB and SPACA9. Interacts (via P-domain) with PDIA5. Interacts with PDIA3/ERp57. Interacts with CLCC1. Predentin and odontoblast.

It is found in the endoplasmic reticulum lumen. The protein localises to the cytoplasm. Its subcellular location is the cytosol. The protein resides in the secreted. It localises to the extracellular space. It is found in the extracellular matrix. The protein localises to the cell surface. Its subcellular location is the sarcoplasmic reticulum lumen. The protein resides in the cytoplasmic vesicle. It localises to the secretory vesicle. It is found in the cortical granule. The protein localises to the cytolytic granule. In terms of biological role, calcium-binding chaperone that promotes folding, oligomeric assembly and quality control in the endoplasmic reticulum (ER) via the calreticulin/calnexin cycle. This lectin interacts transiently with almost all of the monoglucosylated glycoproteins that are synthesized in the ER. Interacts with the DNA-binding domain of NR3C1 and mediates its nuclear export. Involved in maternal gene expression regulation. May participate in oocyte maturation via the regulation of calcium homeostasis. Present in the cortical granules of non-activated oocytes, is exocytosed during the cortical reaction in response to oocyte activation and might participate in the block to polyspermy. This is Calreticulin (Calr) from Rattus norvegicus (Rat).